A 240-amino-acid polypeptide reads, in one-letter code: MSGHSKWHNIQGRKNAQDAKRGKIFQKISHDLYVAAKAGGADPSANASLRLVMDKAKAANMPKDNVQRALDKATGAGDVKFEEATYEGYAPGGIAVLVETSTDNINRTVSNVRNSFNHHGGSLGTSGSVSFQFDRRGHFVIDRQSHPDITEDQVMEDAIEAGAEDVQTSDDAFEIFSQPADFAAVEGALTDKGYDLAESEITMIPQNPVEVPEADQEKFEKLIDELEDNDDVLAVYTTAD.

The disordered stretch occupies residues 1–21; the sequence is MSGHSKWHNIQGRKNAQDAKR.

The protein belongs to the TACO1 family.

Its subcellular location is the cytoplasm. The protein is Probable transcriptional regulatory protein OEOE_0768 of Oenococcus oeni (strain ATCC BAA-331 / PSU-1).